Here is a 289-residue protein sequence, read N- to C-terminus: dTDP-rhamnosyl transferase RfbG (289 aa).

This sequence belongs to the glycosyltransferase 2 family.

It functions in the pathway bacterial outer membrane biogenesis; lipopolysaccharide biosynthesis. This Shigella flexneri protein is dTDP-rhamnosyl transferase RfbG (rfbG).